The following is a 215-amino-acid chain: Variable small protein 6 (215 aa).

An N-terminal signal peptide occupies residues 1 to 18 (MRKRISAIIMTLFMVFMS). Residue Cys-19 is the site of N-palmitoyl cysteine attachment. A lipid anchor (S-diacylglycerol cysteine) is attached at Cys-19.

The protein belongs to the variable small protein (Vsp) family.

It localises to the cell outer membrane. In terms of biological role, the Vlp and Vsp proteins are antigenically distinct proteins, only one vlp or vsp gene is transcriptionally active at any one time. Switching between these genes is a mechanism of host immune response evasion. The polypeptide is Variable small protein 6 (Borrelia hermsii).